Here is an 817-residue protein sequence, read N- to C-terminus: Sorting nexin-29 (817 aa).

The 145-residue stretch at 37–181 (SDSDSRVTCL…ILFAINIDNK (145 aa)) folds into the RUN domain. 5 positions are modified to phosphoserine: Ser269, Ser292, Ser293, Ser331, and Ser345. The segment at 271 to 299 (DDEEDEQSSGDVFKKIPGAGESSEENSDR) is disordered. 2 disordered regions span residues 344-381 (KSID…LDAG) and 417-460 (APLG…LPSA). The segment covering 347 to 358 (DDEDADENEDDV) has biased composition (acidic residues). The segment covering 369–378 (GHSESPEKPL) has biased composition (basic and acidic residues). The span at 445-460 (SPPGQESPLSSLLPSA) shows a compositional bias: low complexity. Residue Ser451 is modified to Phosphoserine. The stretch at 466–546 (MTVSDLRQAI…VLKVQLKKYV (81 aa)) forms a coiled coil. Ser641 carries the post-translational modification Phosphoserine. Residue Thr643 is modified to Phosphothreonine. Ser644 and Ser648 each carry phosphoserine. The PX domain maps to 658–781 (ALINVWIPSV…PFFVDITPPG (124 aa)). The disordered stretch occupies residues 784–817 (LTKNSRPKVASRFPKLARGHPRETRNVEPQSGDL).

The protein belongs to the sorting nexin family.

The polypeptide is Sorting nexin-29 (SNX29) (Bos taurus (Bovine)).